Consider the following 1104-residue polypeptide: Carbamoyl phosphate synthase large chain (1104 aa).

The interval 1–403 is carboxyphosphate synthetic domain; sequence MPRRQDIQKI…SFQKALRSLE (403 aa). ATP contacts are provided by Arg129, Arg170, Gly176, Gly177, Gln209, Leu211, Glu216, Gly242, Ile243, His244, Gln286, and Glu300. The ATP-grasp 1 domain occupies 133–329; the sequence is NEAMDKIGVK…IAKMAAKLAV (197 aa). Gln286, Glu300, and Asn302 together coordinate Mg(2+). Positions 286, 300, and 302 each coordinate Mn(2+). Positions 404-552 are oligomerization domain; that stretch reads TGRAGWGCDK…YSTYEEETEV (149 aa). Positions 553–966 are carbamoyl phosphate synthetic domain; it reads IPASKPKVMI…AFAKAELGAG (414 aa). The ATP-grasp 2 domain maps to 703–900; it reads EKILQKLNIS…LAKLASLIMS (198 aa). Residues Arg739, Lys778, Leu780, Glu785, Gly811, Ile812, His813, Ser814, Gln854, and Glu871 each coordinate ATP. 3 residues coordinate Mg(2+): Gln854, Glu871, and Asn873. Residues Gln854, Glu871, and Asn873 each contribute to the Mn(2+) site. The MGS-like domain occupies 967-1104; the sequence is ERLPLTGTVF…KTIQEYCPNF (138 aa). The interval 967–1104 is allosteric domain; that stretch reads ERLPLTGTVF…KTIQEYCPNF (138 aa).

The protein belongs to the CarB family. Composed of two chains; the small (or glutamine) chain promotes the hydrolysis of glutamine to ammonia, which is used by the large (or ammonia) chain to synthesize carbamoyl phosphate. Tetramer of heterodimers (alpha,beta)4. It depends on Mg(2+) as a cofactor. The cofactor is Mn(2+).

The catalysed reaction is hydrogencarbonate + L-glutamine + 2 ATP + H2O = carbamoyl phosphate + L-glutamate + 2 ADP + phosphate + 2 H(+). It catalyses the reaction hydrogencarbonate + NH4(+) + 2 ATP = carbamoyl phosphate + 2 ADP + phosphate + 2 H(+). It functions in the pathway amino-acid biosynthesis; L-arginine biosynthesis; carbamoyl phosphate from bicarbonate: step 1/1. Its pathway is pyrimidine metabolism; UMP biosynthesis via de novo pathway; (S)-dihydroorotate from bicarbonate: step 1/3. In terms of biological role, large subunit of the glutamine-dependent carbamoyl phosphate synthetase (CPSase). CPSase catalyzes the formation of carbamoyl phosphate from the ammonia moiety of glutamine, carbonate, and phosphate donated by ATP, constituting the first step of 2 biosynthetic pathways, one leading to arginine and/or urea and the other to pyrimidine nucleotides. The large subunit (synthetase) binds the substrates ammonia (free or transferred from glutamine from the small subunit), hydrogencarbonate and ATP and carries out an ATP-coupled ligase reaction, activating hydrogencarbonate by forming carboxy phosphate which reacts with ammonia to form carbamoyl phosphate. This chain is Carbamoyl phosphate synthase large chain, found in Nostoc sp. (strain PCC 7120 / SAG 25.82 / UTEX 2576).